The primary structure comprises 289 residues: Ribonuclease Z (289 aa).

The Zn(2+) site is built by His63, His65, Asp67, His68, His143, Asp197, and His255. Asp67 acts as the Proton acceptor in catalysis.

Belongs to the RNase Z family. As to quaternary structure, homodimer. The cofactor is Zn(2+).

The enzyme catalyses Endonucleolytic cleavage of RNA, removing extra 3' nucleotides from tRNA precursor, generating 3' termini of tRNAs. A 3'-hydroxy group is left at the tRNA terminus and a 5'-phosphoryl group is left at the trailer molecule.. Functionally, zinc phosphodiesterase, which displays some tRNA 3'-processing endonuclease activity. Probably involved in tRNA maturation, by removing a 3'-trailer from precursor tRNA. This is Ribonuclease Z from Azobacteroides pseudotrichonymphae genomovar. CFP2.